The sequence spans 954 residues: Glycine dehydrogenase (decarboxylating) (954 aa).

Lys-704 is subject to N6-(pyridoxal phosphate)lysine.

It belongs to the GcvP family. The glycine cleavage system is composed of four proteins: P, T, L and H. The cofactor is pyridoxal 5'-phosphate.

It catalyses the reaction N(6)-[(R)-lipoyl]-L-lysyl-[glycine-cleavage complex H protein] + glycine + H(+) = N(6)-[(R)-S(8)-aminomethyldihydrolipoyl]-L-lysyl-[glycine-cleavage complex H protein] + CO2. In terms of biological role, the glycine cleavage system catalyzes the degradation of glycine. The P protein binds the alpha-amino group of glycine through its pyridoxal phosphate cofactor; CO(2) is released and the remaining methylamine moiety is then transferred to the lipoamide cofactor of the H protein. This Allorhizobium ampelinum (strain ATCC BAA-846 / DSM 112012 / S4) (Agrobacterium vitis (strain S4)) protein is Glycine dehydrogenase (decarboxylating).